Consider the following 706-residue polypeptide: Fatty acid oxidation complex subunit alpha (706 aa).

Residues 1-188 form an enoyl-CoA hydratase region; it reads MDKSFTLNRL…KMGLVDDVVP (188 aa). The interval 308–706 is 3-hydroxyacyl-CoA dehydrogenase; the sequence is KAVNKVMVLG…MAESGSKFYE (399 aa).

The protein in the N-terminal section; belongs to the enoyl-CoA hydratase/isomerase family. It in the central section; belongs to the 3-hydroxyacyl-CoA dehydrogenase family. In terms of assembly, heterotetramer of two alpha chains (FadJ) and two beta chains (FadI).

It localises to the cytoplasm. The catalysed reaction is a (3S)-3-hydroxyacyl-CoA = a (2E)-enoyl-CoA + H2O. The enzyme catalyses a 4-saturated-(3S)-3-hydroxyacyl-CoA = a (3E)-enoyl-CoA + H2O. It carries out the reaction a (3S)-3-hydroxyacyl-CoA + NAD(+) = a 3-oxoacyl-CoA + NADH + H(+). It catalyses the reaction (3S)-3-hydroxybutanoyl-CoA = (3R)-3-hydroxybutanoyl-CoA. The protein operates within lipid metabolism; fatty acid beta-oxidation. Its function is as follows. Catalyzes the formation of a hydroxyacyl-CoA by addition of water on enoyl-CoA. Also exhibits 3-hydroxyacyl-CoA epimerase and 3-hydroxyacyl-CoA dehydrogenase activities. The sequence is that of Fatty acid oxidation complex subunit alpha from Shewanella loihica (strain ATCC BAA-1088 / PV-4).